Here is a 679-residue protein sequence, read N- to C-terminus: DNA ligase (679 aa).

NAD(+) is bound by residues 86–90 (DEAYD) and 129–130 (ST). The N6-AMP-lysine intermediate role is filled by K167. Residues R183, E214, and K326 each contribute to the NAD(+) site. Positions 417, 420, 433, and 439 each coordinate Zn(2+). One can recognise a BRCT domain in the interval 599–679 (GEKSPISGKT…EAYRQLVSLD (81 aa)).

The protein belongs to the NAD-dependent DNA ligase family. LigA subfamily. It depends on Mg(2+) as a cofactor. The cofactor is Mn(2+).

The catalysed reaction is NAD(+) + (deoxyribonucleotide)n-3'-hydroxyl + 5'-phospho-(deoxyribonucleotide)m = (deoxyribonucleotide)n+m + AMP + beta-nicotinamide D-nucleotide.. Its function is as follows. DNA ligase that catalyzes the formation of phosphodiester linkages between 5'-phosphoryl and 3'-hydroxyl groups in double-stranded DNA using NAD as a coenzyme and as the energy source for the reaction. It is essential for DNA replication and repair of damaged DNA. The polypeptide is DNA ligase (Desulfotalea psychrophila (strain LSv54 / DSM 12343)).